Consider the following 193-residue polypeptide: Probable thymidylate kinase (193 aa).

Residue 7–14 (GIDGSGKT) coordinates ATP.

Belongs to the thymidylate kinase family.

The enzyme catalyses dTMP + ATP = dTDP + ADP. This is Probable thymidylate kinase from Pyrobaculum calidifontis (strain DSM 21063 / JCM 11548 / VA1).